The primary structure comprises 286 residues: Histone H2A.v2 (286 aa).

A compositionally biased stretch (polar residues) spans 1-26 (MKSNGHPSNNSINEPIKQQETKQNNK). Residues 1–180 (MKSNGHPSNN…KFKKTIRSSR (180 aa)) are disordered. 3 stretches are compositionally biased toward low complexity: residues 44 to 59 (QPKTSSFSNSSFQSST), 76 to 104 (QPKTSSSSYSSLSSPSPSQPKTSSPSLPS), and 115 to 138 (LKSPSSSSSSQPKTSSSSYSSLPS).

It belongs to the histone H2A family.

The polypeptide is Histone H2A.v2 (H2Av2) (Dictyostelium discoideum (Social amoeba)).